Here is a 258-residue protein sequence, read N- to C-terminus: UPF0246 protein Shew_1093 (258 aa).

Belongs to the UPF0246 family.

This is UPF0246 protein Shew_1093 from Shewanella loihica (strain ATCC BAA-1088 / PV-4).